A 316-amino-acid polypeptide reads, in one-letter code: D-alanine--D-alanine ligase (316 aa).

An ATP-grasp domain is found at 109–304; it reads KRLWRGMDLP…FDEMVLQILA (196 aa). 135-190 is an ATP binding site; sequence AADLGLPLIVKPAREGSSLGMMKVESIEALQSAYREAVIFDTAVFAERWLPGAEYT. Mg(2+)-binding residues include aspartate 258, glutamate 271, and asparagine 273.

It belongs to the D-alanine--D-alanine ligase family. Mg(2+) is required as a cofactor. The cofactor is Mn(2+).

The protein localises to the cytoplasm. The enzyme catalyses 2 D-alanine + ATP = D-alanyl-D-alanine + ADP + phosphate + H(+). Its pathway is cell wall biogenesis; peptidoglycan biosynthesis. Cell wall formation. This is D-alanine--D-alanine ligase from Nitrosococcus oceani (strain ATCC 19707 / BCRC 17464 / JCM 30415 / NCIMB 11848 / C-107).